The primary structure comprises 188 residues: Peptidyl-tRNA hydrolase (188 aa).

Tyr14 provides a ligand contact to tRNA. His19 functions as the Proton acceptor in the catalytic mechanism. Positions 64, 66, and 112 each coordinate tRNA.

The protein belongs to the PTH family. As to quaternary structure, monomer.

Its subcellular location is the cytoplasm. It carries out the reaction an N-acyl-L-alpha-aminoacyl-tRNA + H2O = an N-acyl-L-amino acid + a tRNA + H(+). Hydrolyzes ribosome-free peptidyl-tRNAs (with 1 or more amino acids incorporated), which drop off the ribosome during protein synthesis, or as a result of ribosome stalling. Its function is as follows. Catalyzes the release of premature peptidyl moieties from peptidyl-tRNA molecules trapped in stalled 50S ribosomal subunits, and thus maintains levels of free tRNAs and 50S ribosomes. The protein is Peptidyl-tRNA hydrolase of Enterococcus faecalis (strain ATCC 700802 / V583).